A 105-amino-acid polypeptide reads, in one-letter code: Large ribosomal subunit protein uL24 (105 aa).

The protein belongs to the universal ribosomal protein uL24 family. Part of the 50S ribosomal subunit.

In terms of biological role, one of two assembly initiator proteins, it binds directly to the 5'-end of the 23S rRNA, where it nucleates assembly of the 50S subunit. One of the proteins that surrounds the polypeptide exit tunnel on the outside of the subunit. In Hahella chejuensis (strain KCTC 2396), this protein is Large ribosomal subunit protein uL24.